A 955-amino-acid chain; its full sequence is UvrABC system protein A (955 aa).

35–42 (GLSGSGKS) is an ATP binding site. ABC transporter domains are found at residues 322–601 (WGST…EESI) and 621–951 (GHDN…RYLK). Position 654–661 (654–661 (GVSGSGKS)) interacts with ATP. A C4-type zinc finger spans residues 754–780 (CEACQGDGLIKIEMHFLPDVYVKCDIC).

The protein belongs to the ABC transporter superfamily. UvrA family. Forms a heterotetramer with UvrB during the search for lesions.

Its subcellular location is the cytoplasm. Functionally, the UvrABC repair system catalyzes the recognition and processing of DNA lesions. UvrA is an ATPase and a DNA-binding protein. A damage recognition complex composed of 2 UvrA and 2 UvrB subunits scans DNA for abnormalities. When the presence of a lesion has been verified by UvrB, the UvrA molecules dissociate. The chain is UvrABC system protein A from Rickettsia conorii (strain ATCC VR-613 / Malish 7).